A 513-amino-acid chain; its full sequence is ATP synthase subunit alpha (513 aa).

Position 169–176 (169–176 (GDRQTGKT)) interacts with ATP.

Belongs to the ATPase alpha/beta chains family. As to quaternary structure, F-type ATPases have 2 components, CF(1) - the catalytic core - and CF(0) - the membrane proton channel. CF(1) has five subunits: alpha(3), beta(3), gamma(1), delta(1), epsilon(1). CF(0) has three main subunits: a(1), b(2) and c(9-12). The alpha and beta chains form an alternating ring which encloses part of the gamma chain. CF(1) is attached to CF(0) by a central stalk formed by the gamma and epsilon chains, while a peripheral stalk is formed by the delta and b chains.

It is found in the cell inner membrane. It catalyses the reaction ATP + H2O + 4 H(+)(in) = ADP + phosphate + 5 H(+)(out). Functionally, produces ATP from ADP in the presence of a proton gradient across the membrane. The alpha chain is a regulatory subunit. The chain is ATP synthase subunit alpha from Bordetella avium (strain 197N).